The primary structure comprises 725 residues: Lipoamidase (725 aa).

Residues 1-52 are disordered; it reads MLAQESILETTVQTETESVTTETSQTVANLESETTSQTVMQEKESSSAIAES. The segment covering 9-27 has biased composition (low complexity); sequence ETTVQTETESVTTETSQTV. Polar residues predominate over residues 28–40; that stretch reads ANLESETTSQTVM. Residues Lys-159 and Ser-235 each act as charge relay system in the active site. Residue Ser-259 is the Acyl-ester intermediate of the active site. Residues 551 to 686 form a disordered region; sequence KINQPHVEEP…NKSMIGKQEQ (136 aa). The segment covering 556–637 has biased composition (basic and acidic residues); sequence HVEEPDKDKE…TSEGPIEGKD (82 aa). A compositionally biased stretch (low complexity) spans 650–661; that stretch reads SGSSLDNSLNSS. Positions 662 to 679 are enriched in polar residues; sequence ANQGTKSTESTHAFSNKS. Residues 700–720 form a helical membrane-spanning segment; sequence PSTFWIVLGGAFLVTSGTIYI.

The protein belongs to the amidase family. In terms of assembly, homodimer in solution.

It is found in the cell membrane. The enzyme catalyses N(6)-[(R)-lipoyl]-L-lysyl-[lipoyl-carrier protein] + H2O = L-lysyl-[lipoyl-carrier protein] + (R)-lipoate. Its activity is regulated as follows. Lipoamidase activity is slightly inhibited by p-chloromercuribenzoate. Amidohydrolase that releases lipoic acid from the protein-bound form. Cleaves the amide bond that links lipoic acid to the lipoylated lysine epsilon-amino groups, leading to the formation of free lipoic acid plus the unmodified protein. Shows activity toward both high molecular weight protein substrates such as a lipoyl domain and intact 2-oxoacid dehydrogenases as well as small molecule substrates such as lipoyl-lysine. Also acts on small biotinylated substrates. Hydrolyzes the synthetic substrates methyl lipoate and lipoamide. The physiologically important substrates are probably lipoyl-lysine and small peptides containing lipoyl-lysine. Lpa seems likely to enable this bacterium to utilize amide-linked forms of lipoic acid that otherwise could not be assimilated. The polypeptide is Lipoamidase (Enterococcus faecalis (Streptococcus faecalis)).